The following is a 128-amino-acid chain: Holin-like protein CidA (128 aa).

The next 4 membrane-spanning stretches (helical) occupy residues 4–24, 27–46, 59–79, and 88–108; these read LLLT…INWV, ALHI…FTLL, GAAW…VGVI, and FGVS…VSTG.

It belongs to the CidA/LrgA family. CidA subfamily.

It is found in the cell membrane. In terms of biological role, increases the activity of extracellular murein hydrolases possibly by mediating their export via hole formation. Inhibited by the antiholin-like proteins LrgAB. In an unstressed cell, the LrgAB products probably inhibit the function of the CidA protein. When a cell is stressed by the addition of antibiotics or by other factors in the environment, CidA possibly oligomerizes within the bacterial cell membrane, creating lesions that disrupt the proton motive force, which in turn results in loss of cell viability. These lesions are also hypothesized to regulate the subsequent cell lysis by either allowing the murein hydrolases access to the cell wall substrate and/or regulating their activity by a possible change in the cell wall pH that results from loss of membrane potential. This Bacillus velezensis (strain DSM 23117 / BGSC 10A6 / LMG 26770 / FZB42) (Bacillus amyloliquefaciens subsp. plantarum) protein is Holin-like protein CidA.